Here is an 87-residue protein sequence, read N- to C-terminus: Large ribosomal subunit protein bL27 (87 aa).

Positions 1–21 are disordered; sequence MAHKKAGGSSRNGRDSESKRL.

Belongs to the bacterial ribosomal protein bL27 family.

The polypeptide is Large ribosomal subunit protein bL27 (Aromatoleum aromaticum (strain DSM 19018 / LMG 30748 / EbN1) (Azoarcus sp. (strain EbN1))).